A 134-amino-acid chain; its full sequence is MARVKRGVTAHAKHKKVLKAAKGFYGRRKNTIRTAKAAVDRSKQYAYRDRKVNKRNFRALWIQRINAAVREFGLTYGRFIDGLNKAGIEVDRKVLSDMAIHEPEAFGALVNAAKKALEYLKEAGTANEFEGAVK.

It belongs to the bacterial ribosomal protein bL20 family.

In terms of biological role, binds directly to 23S ribosomal RNA and is necessary for the in vitro assembly process of the 50S ribosomal subunit. It is not involved in the protein synthesizing functions of that subunit. The sequence is that of Large ribosomal subunit protein bL20 from Rhizobium leguminosarum bv. trifolii (strain WSM2304).